A 434-amino-acid chain; its full sequence is Serine--tRNA ligase (434 aa).

239-241 is a binding site for L-serine; that stretch reads TAE. 270–272 is an ATP binding site; sequence RSE. L-serine is bound at residue glutamate 293. ATP is bound at residue 357–360; it reads EISS. Serine 392 provides a ligand contact to L-serine.

The protein belongs to the class-II aminoacyl-tRNA synthetase family. Type-1 seryl-tRNA synthetase subfamily. As to quaternary structure, homodimer. The tRNA molecule binds across the dimer.

It is found in the cytoplasm. The enzyme catalyses tRNA(Ser) + L-serine + ATP = L-seryl-tRNA(Ser) + AMP + diphosphate + H(+). It carries out the reaction tRNA(Sec) + L-serine + ATP = L-seryl-tRNA(Sec) + AMP + diphosphate + H(+). Its pathway is aminoacyl-tRNA biosynthesis; selenocysteinyl-tRNA(Sec) biosynthesis; L-seryl-tRNA(Sec) from L-serine and tRNA(Sec): step 1/1. Functionally, catalyzes the attachment of serine to tRNA(Ser). Is also able to aminoacylate tRNA(Sec) with serine, to form the misacylated tRNA L-seryl-tRNA(Sec), which will be further converted into selenocysteinyl-tRNA(Sec). In Cupriavidus necator (strain ATCC 17699 / DSM 428 / KCTC 22496 / NCIMB 10442 / H16 / Stanier 337) (Ralstonia eutropha), this protein is Serine--tRNA ligase.